We begin with the raw amino-acid sequence, 149 residues long: Transcriptional repressor NrdR (149 aa).

A zinc finger lies at 3–34 (CPFCGFEESKVVDSRSTDDNTTIRRRRECLKC). The ATP-cone domain maps to 49 to 139 (ILVIKKDLTR…VYRQFKDIDT (91 aa)).

Belongs to the NrdR family. Requires Zn(2+) as cofactor.

In terms of biological role, negatively regulates transcription of bacterial ribonucleotide reductase nrd genes and operons by binding to NrdR-boxes. The polypeptide is Transcriptional repressor NrdR (Clostridium beijerinckii (strain ATCC 51743 / NCIMB 8052) (Clostridium acetobutylicum)).